A 297-amino-acid polypeptide reads, in one-letter code: Protoheme IX farnesyltransferase 1 (297 aa).

A run of 9 helical transmembrane segments spans residues 23–43 (VVVL…RAGV), 45–65 (WSVL…AAVV), 93–113 (LPAL…LLAF), 117–137 (LTAW…TGFL), 145–165 (IVIG…AVSG), 171–191 (PLLL…ALAI), 216–236 (LHIL…YAIH), 241–261 (LYLA…WVLY), and 277–297 (IAYL…LLNL).

It belongs to the UbiA prenyltransferase family. Protoheme IX farnesyltransferase subfamily.

The protein resides in the cell inner membrane. The catalysed reaction is heme b + (2E,6E)-farnesyl diphosphate + H2O = Fe(II)-heme o + diphosphate. Its pathway is porphyrin-containing compound metabolism; heme O biosynthesis; heme O from protoheme: step 1/1. Converts heme B (protoheme IX) to heme O by substitution of the vinyl group on carbon 2 of heme B porphyrin ring with a hydroxyethyl farnesyl side group. The polypeptide is Protoheme IX farnesyltransferase 1 (Pseudomonas putida (strain GB-1)).